A 714-amino-acid polypeptide reads, in one-letter code: Stellatatriene synthase (714 aa).

The interval 1–325 is stellata-2,6,19-trien synthase; the sequence is MEYKFSTVVD…RYNSSGSFSD (325 aa). 2 residues coordinate Mg(2+): Asp-92 and Asp-96. The short motif at 92–96 is the DDXXD motif 1 element; that stretch reads DDVTD. The NSE motif motif lies at 276-284; that stretch reads YLKIVEEYK. Residues 326-713 are geranylgeranyl diphosphate synthase; that stretch reads HQLELMKNGV…LRLIMELLKT (388 aa). A disordered region spans residues 332–356; it reads KNGVPKDPASGSTNGTSNGTSNGTS. Residues 341–356 show a composition bias toward low complexity; it reads SGSTNGTSNGTSNGTS. Isopentenyl diphosphate-binding residues include Lys-434, Arg-437, and His-466. Mg(2+) is bound by residues Asp-473 and Asp-477. The DDXXD motif 2 motif lies at 473–477; sequence DDVED. Arg-482 is a binding site for dimethylallyl diphosphate. Arg-483 lines the isopentenyl diphosphate pocket. Residues Lys-560, Thr-561, Gln-596, Asn-603, Lys-613, and Lys-623 each coordinate dimethylallyl diphosphate.

It in the N-terminal section; belongs to the terpene synthase family. This sequence in the C-terminal section; belongs to the FPP/GGPP synthase family. As to quaternary structure, hexamer.

It catalyses the reaction 4 isopentenyl diphosphate + dimethylallyl diphosphate = (2E,6E,10E,14E)-geranylfarnesyl diphosphate + 4 diphosphate. It carries out the reaction (2E,6E,10E,14E)-geranylfarnesyl diphosphate = stellata-2,6,19-triene + diphosphate. It functions in the pathway secondary metabolite biosynthesis; terpenoid biosynthesis. Functionally, multifunctional diterpene synthase; part of the gene cluster that mediates the biosynthesis of the sesterterpene stellatic acid. The first step in the pathway is performed by the stellatatriene synthase that possesses both prenyl transferase and terpene cyclase activity, converting isopentenyl diphosphate and dimethylallyl diphosphate into geranylgeranyl diphosphate (GGDP) and then converting GGDP into stellata-2,6,19-triene. The cytochrome P450 monooxygenase Stl-P450 then catalyzes three successive oxidation reactions on the C-20 methyl group to generate the carboxylic acid of stellatic acid. The sequence is that of Stellatatriene synthase from Emericella variicolor (Aspergillus stellatus).